A 586-amino-acid chain; its full sequence is Chaperone protein HscA homolog (586 aa).

Belongs to the heat shock protein 70 family.

Functionally, chaperone involved in the maturation of iron-sulfur cluster-containing proteins. Has a low intrinsic ATPase activity which is markedly stimulated by HscB. In Rickettsia typhi (strain ATCC VR-144 / Wilmington), this protein is Chaperone protein HscA homolog.